The sequence spans 1843 residues: Nonribosomal peptide synthetase SIDD (1843 aa).

Residues Met1–Ser83 form a disordered region. Positions Gln65–Gln81 are enriched in low complexity. Positions Thr133–Cys528 are adenylation 1. The interval Lys628–Glu647 is disordered. Residues Glu641–Ser716 enclose the Carrier 1 domain. Ser677 is modified (O-(pantetheine 4'-phosphoryl)serine). The tract at residues Val753–Leu1175 is condensation 1. One can recognise a Carrier 2 domain in the interval Ser1289–Asp1365. An O-(pantetheine 4'-phosphoryl)serine modification is found at Ser1326. Positions Phe1447 to Leu1734 are condensation 2.

The protein belongs to the NRP synthetase family. It depends on pantetheine 4'-phosphate as a cofactor.

It functions in the pathway siderophore biosynthesis. Its function is as follows. Nonribosomal peptide synthetase; part of the gene cluster that mediates the biosynthesis of at least 11 siderophores, including beauverichelin A, dimerumic acid (DA), Na-dimethyl coprogen (NADC), eleutherazine B, ferricrocin (FC), fusarinine A, fusarinine C (FsC), metachelin A, mevalonolactone, rhodotorulic acid (RA) and tenellin. This cocktail of siderophores for iron metabolism is essential for virulence, and more specifically for the fungal virulence in penetrating through the host cuticle. Siderophore synthesis is also involved in conidial germination under iron-deficient conditions. SIDC catalyzes the assembly of ferricrocin whereas SIDD catalyzes the assembly of fusarinine C. The sequence is that of Nonribosomal peptide synthetase SIDD from Beauveria bassiana (strain ARSEF 2860) (White muscardine disease fungus).